Consider the following 64-residue polypeptide: Protein translocase subunit SecE (64 aa).

A helical transmembrane segment spans residues 35-55; the sequence is LVVLGTVAFITVFFAVVDYGI.

The protein belongs to the SecE/SEC61-gamma family. In terms of assembly, component of the Sec protein translocase complex. Heterotrimer consisting of SecY, SecE and SecG subunits. The heterotrimers can form oligomers, although 1 heterotrimer is thought to be able to translocate proteins. Interacts with the ribosome. Interacts with SecDF, and other proteins may be involved. Interacts with SecA.

It is found in the cell membrane. Its function is as follows. Essential subunit of the Sec protein translocation channel SecYEG. Clamps together the 2 halves of SecY. May contact the channel plug during translocation. This chain is Protein translocase subunit SecE, found in Halalkalibacterium halodurans (strain ATCC BAA-125 / DSM 18197 / FERM 7344 / JCM 9153 / C-125) (Bacillus halodurans).